A 913-amino-acid polypeptide reads, in one-letter code: MDFSRLHTYTPPQCVPENTGYTYALSSSYSSDALDFETEHKLEPVFDSPRMSRRSLRLVTTASYSSGDSQAIDSHISTSRATPAKGRETRTVKQRRSASKPAFSINHLSGKGLSSSTSHDSSCSLRSATVLRHPVLDESLIREQTKVDHFWGLDDDGDLKGGNKAATQGNGELAAEVASSNGYTCRDCRMLSARTDALTAHSAIHGTTSRVYSRDRTLKPRGVSFYLDRTLWLAKSTSSSFASFIVQLFQVVLMKLNFETYKLKGYESRAYESQSYETKSHESEAHLGHCGRMTAGELSRVDGESLCDDCKGKKHLEIHTATHSQLPQPHRVAGAMGRLCIYTGDLLVQALRRTRAAGWSVAEAVWSVLWLAVSAPGKAASGTFWWLGSGWYQFVTLISWLNVFLLTRCLRNICKVFVLLLPLLLLLGAGVSLWGQGNFFSLLPVLNWTAMQPTQRVDDSKGMHRPGPLPPSPPPKVDHKASQWPQESDMGQKVASLSAQCHNHDERLAELTVLLQKLQIRVDQVDDGREGLSLWVKNVVGQHLQEMGTIEPPDAKTDFMTFHHDHEVRLSNLEDVLRKLTEKSEAIQKELEETKLKAGSRDEEQPLLDRVQHLELELNLLKSQLSDWQHLKTSCEQAGARIQETVQLMFSEDQQGGSLEWLLEKLSSRFVSKDELQVLLHDLELKLLQNITHHITVTGQAPTSEAIVSAVNQAGISGITEAQAHIIVNNALKLYSQDKTGMVDFALESGGGSILSTRCSETYETKTALLSLFGVPLWYFSQSPRVVIQPDIYPGNCWAFKGSQGYLVVRLSMKIYPTTFTMEHIPKTLSPTGNISSAPKDFAVYGLETEYQEEGQPLGRFTYDQEGDSLQMFHTLERPDQAFQIVELRVLSNWGHPEYTCLYRFRVHGEPIQ.

Residues 1–139 (MDFSRLHTYT…VLRHPVLDES (139 aa)) are LMNA-binding. Residues 1 to 415 (MDFSRLHTYT…LTRCLRNICK (415 aa)) lie on the Nuclear side of the membrane. A phosphoserine mark is found at Ser-48 and Ser-66. Polar residues predominate over residues 69–81 (SQAIDSHISTSRA). Positions 69–120 (SQAIDSHISTSRATPAKGRETRTVKQRRSASKPAFSINHLSGKGLSSSTSHD) are disordered. The segment covering 108–120 (LSGKGLSSSTSHD) has biased composition (low complexity). Ser-139 is subject to Phosphoserine. Residues 209–302 (SRVYSRDRTL…MTAGELSRVD (94 aa)) form an SYNE2-binding region. Residues 223–302 (VSFYLDRTLW…MTAGELSRVD (80 aa)) are EMD-binding. A helical transmembrane segment spans residues 416-436 (VFVLLLPLLLLLGAGVSLWGQ). Residues 437–913 (GNFFSLLPVL…RFRVHGEPIQ (477 aa)) are Perinuclear space-facing. Residues 456-485 (RVDDSKGMHRPGPLPPSPPPKVDHKASQWP) are disordered. Coiled coils occupy residues 491–533 (GQKV…EGLS) and 563–638 (HHDH…CEQA). A sufficient for interaction with SYNE1 and SYNE2 region spans residues 703–913 (TSEAIVSAVN…RFRVHGEPIQ (211 aa)). The SUN domain occupies 751–912 (GGSILSTRCS…YRFRVHGEPI (162 aa)).

Core component of the LINC complex which is composed of inner nuclear membrane SUN domain-containing proteins coupled to outer nuclear membrane KASH domain-containing nesprins. SUN and KASH domain-containing proteins seem to bind each other promiscuously; however, differentially expression of LINC complex constituents is giving rise to specific assemblies. At least SUN1/2-containing core LINC complexes are proposed to be hexameric composed of three protomers of each KASH and SUN domain-containing protein. Interacts with KASH5 (via the last 22 amino acids); this interaction mediates KASH5 telomere localization by forming a SUN1:KASH5 LINC complex. Isoform 5 is proposed to form a non-nuclear spermatogenesis-specific LINC complex with SYNE3 during sperm head formation. Interacts with SYNE2 and SYNE1; probably forming respective LINC complexes. Interacts with A-type lamin with a strong preference for unprocessed A-type lamin compared with the mature protein. Interaction with lamins B1 and C is hardly detectable. Interacts with NAT10. Interacts with EMD and TSNAX. Associates with the nuclear pore complex (NPC). Interacts with CCDC79/TERB1; promoting the accumulation of the LINC complex complexes at the telomere-nuclear envelope attachment sites. Interacts with IRAG2. Interacts (via KASH domain) with TMEM258. Post-translationally, the disulfide bond with KASH domain-containing nesprins is required for stability of the respective LINC complexes under tensile forces. As to expression, widely expressed. Expressed in cochlear outer hair cells (at protein level). Seven isoforms are expressed in testis including testis-specific isoform 5. Isoform 5 is the only isoform expressed at the end of sperm differentiation. Six isoforms are expressed in muscle, heart and brain, four isoforms in kidney and three isoforms in liver.

The protein resides in the nucleus inner membrane. It is found in the cytoplasmic vesicle. It localises to the secretory vesicle. Its subcellular location is the acrosome outer membrane. Functionally, as a component of the LINC (LInker of Nucleoskeleton and Cytoskeleton) complex involved in the connection between the nuclear lamina and the cytoskeleton. The nucleocytoplasmic interactions established by the LINC complex play an important role in the transmission of mechanical forces across the nuclear envelope and in nuclear movement and positioning. Required for interkinetic nuclear migration (INM) and essential for nucleokinesis and centrosome-nucleus coupling during radial neuronal migration in the cerebral cortex and during glial migration. Involved in telomere attachment to nuclear envelope in the prophase of meiosis implicating a SUN1/2:KASH5 LINC complex in which SUN1 and SUN2 seem to act at least partial redundantly. Required for gametogenesis and involved in selective gene expression of coding and non-coding RNAs needed for gametogenesis. Helps to define the distribution of nuclear pore complexes (NPCs). Required for efficient localization of SYNE4 in the nuclear envelope. May be involved in nuclear remodeling during sperm head formation in spermatogenesis. May play a role in DNA repair by suppressing non-homologous end joining repair to facilitate the repair of DNA cross-links. Isoform 5 may be involved in nuclear remodeling during sperm head formation in spermatogenesis. A probable SUN1 isoform 5:SYNE3 LINC complex may tether spermatid nuclei to anterior cytoskeletal structures such as actin filaments present at membraneous junctions of spermatids and Sertoli cells. This is SUN domain-containing protein 1 from Mus musculus (Mouse).